The primary structure comprises 539 residues: CTP synthase (539 aa).

The segment at 1-268 (MADTKYIFVT…DETVLRKVGL (268 aa)) is amidoligase domain. S15 lines the CTP pocket. UTP is bound at residue S15. ATP is bound at residue 16-21 (SLGKGI). Position 56 (Y56) interacts with L-glutamine. An ATP-binding site is contributed by D73. Mg(2+)-binding residues include D73 and E143. CTP is bound by residues 150-152 (DIE), 189-194 (KTKPTQ), and K225. Residues 189–194 (KTKPTQ) and K225 contribute to the UTP site. The region spanning 294 to 536 (TIALVGKYVE…IREAIKTRKK (243 aa)) is the Glutamine amidotransferase type-1 domain. An L-glutamine-binding site is contributed by G356. The active-site Nucleophile; for glutamine hydrolysis is C383. L-glutamine contacts are provided by residues 384 to 387 (LGMQ), E407, and R464. Active-site residues include H509 and E511.

The protein belongs to the CTP synthase family. In terms of assembly, homotetramer.

The catalysed reaction is UTP + L-glutamine + ATP + H2O = CTP + L-glutamate + ADP + phosphate + 2 H(+). The enzyme catalyses L-glutamine + H2O = L-glutamate + NH4(+). It catalyses the reaction UTP + NH4(+) + ATP = CTP + ADP + phosphate + 2 H(+). It participates in pyrimidine metabolism; CTP biosynthesis via de novo pathway; CTP from UDP: step 2/2. Allosterically activated by GTP, when glutamine is the substrate; GTP has no effect on the reaction when ammonia is the substrate. The allosteric effector GTP functions by stabilizing the protein conformation that binds the tetrahedral intermediate(s) formed during glutamine hydrolysis. Inhibited by the product CTP, via allosteric rather than competitive inhibition. Functionally, catalyzes the ATP-dependent amination of UTP to CTP with either L-glutamine or ammonia as the source of nitrogen. Regulates intracellular CTP levels through interactions with the four ribonucleotide triphosphates. The sequence is that of CTP synthase from Porphyromonas gingivalis (strain ATCC BAA-308 / W83).